Consider the following 735-residue polypeptide: Muskelin (735 aa).

Alanine 2 carries the post-translational modification N-acetylalanine. The LisH domain maps to 172-204; sequence REQEAIRLCLKHFRQHNYTEAFESLQKKTKIAL. In terms of domain architecture, CTLH spans 206 to 258; sequence HPMLTDIHDKLVLKGDFDACEELIEKAVNDGLFNQYISQQEYKPRWSQIIPKS. Kelch repeat units lie at residues 284–330, 339–391, 408–458, 469–515, 526–578, and 597–651; these read TVYL…SCHK, QIYT…FDHQ, ILTC…SRIG, CLYV…TGFT, EIHV…SLQE, and VHYL…AQVD.

In terms of assembly, homodimer; may form higher oligomers. Identified in the CTLH complex that contains GID4, RANBP9 and/or RANBP10, MKLN1, MAEA, RMND5A (or alternatively its paralog RMND5B), GID8, ARMC8, WDR26 and YPEL5. Within this complex, MAEA, RMND5A (or alternatively its paralog RMND5B), GID8, WDR26, and RANBP9 and/or RANBP10 form the catalytic core, while GID4, MKLN1, ARMC8 and YPEL5 have ancillary roles. Interacts with RANBP9. Part of a complex consisting of RANBP9, MKLN1 and GID8. Interacts with GABRA1. Interacts with the C-terminal tail of PTGER3.

The protein localises to the cytoplasm. It is found in the cytosol. It localises to the nucleus. The protein resides in the nucleoplasm. Its subcellular location is the cell projection. The protein localises to the ruffle. It is found in the cell cortex. It localises to the synapse. The protein resides in the postsynapse. Component of the CTLH E3 ubiquitin-protein ligase complex that selectively accepts ubiquitin from UBE2H and mediates ubiquitination and subsequent proteasomal degradation of the transcription factor HBP1. Required for internalization of the GABA receptor GABRA1 from the cell membrane via endosomes and subsequent GABRA1 degradation. Acts as a mediator of cell spreading and cytoskeletal responses to the extracellular matrix component THBS1. In Homo sapiens (Human), this protein is Muskelin (MKLN1).